The chain runs to 805 residues: BLOC-2 complex member HPS6 (805 aa).

The interval 743–805 is disordered; the sequence is GAQGRPSGPV…LGAADVGVHL (63 aa). Over residues 764–773 the composition is skewed to pro residues; sequence GTPPPTPPRG.

In terms of assembly, component of the biogenesis of lysosome-related organelles complex-2 (or BLOC2) composed of HPS3, HPS5 and HPS6. Interacts with HPS5 and HPS3. Interacts with biogenesis of lysosome-related organelles complex-1 (BLOC1). Interacts with dynein intermediate chain. Interacts with AP-3 complex. Interacts with DCTN1. As to expression, widely expressed, with lowest expression in skeletal muscle.

The protein resides in the microsome membrane. It is found in the cytoplasm. The protein localises to the cytosol. It localises to the early endosome membrane. Its subcellular location is the lysosome membrane. Functionally, may regulate the synthesis and function of lysosomes and of highly specialized organelles, such as melanosomes and platelet dense granules. Acts as a cargo adapter for the dynein-dynactin motor complex to mediate the transport of lysosomes from the cell periphery to the perinuclear region. Facilitates retrograde lysosomal trafficking by linking the motor complex to lysosomes, and perinuclear positioning of lysosomes is crucial for the delivery of endocytic cargos to lysosomes, for lysosome maturation and functioning. This chain is BLOC-2 complex member HPS6 (Hps6), found in Mus musculus (Mouse).